The primary structure comprises 433 residues: MTFGRGGAASVVLNVGGARYSLSRELLKDFPLRRVSRLHGCRSERDVLEVCDDYDRERNEYFFDRHSEAFGFILLYVRGHGKLRFAPRMCELSFYNEMIYWGLEGAHLEYCCQRRLDDRMSDTHTFHAADELGREQPRPAGPEAAPSRRWLERMRRTFEEPTSSLAAQILASVSVVFVIVSMVVLCASTLPDWRAAVADNRSLDDRSRYSASPGREPSGIIEAICIGWFTAECIVRFIVSKNKCEFVKRPLNIIDLLAITPYYISVLMTVFTGENSQLQRAGVTLRVLRMMRIFWVIKLARHFIGLQTLGLTLKRCYREMAMLLVFICVAMAIFSALSQLLEHGLDLETSNKDFASIPAACWWVIISMTTVGYGDMYPITVPGRILGGVCVVSGIVLLALPITFIYHSFVQCYHELKFRSARYSRSLSAEFLN.

Residues 1–165 (MTFGRGGAAS…RTFEEPTSSL (165 aa)) are Cytoplasmic-facing. The helical transmembrane segment at 166–187 (AAQILASVSVVFVIVSMVVLCA) threads the bilayer. The Extracellular segment spans residues 188–217 (STLPDWRAAVADNRSLDDRSRYSASPGREP). The chain crosses the membrane as a helical span at residues 218–239 (SGIIEAICIGWFTAECIVRFIV). Residues 240-250 (SKNKCEFVKRP) are Cytoplasmic-facing. Residues 251-271 (LNIIDLLAITPYYISVLMTVF) form a helical membrane-spanning segment. Over 272-281 (TGENSQLQRA) the chain is Extracellular. The chain crosses the membrane as a helical; Voltage-sensor span at residues 282-302 (GVTLRVLRMMRIFWVIKLARH). Residues 303 to 317 (FIGLQTLGLTLKRCY) lie on the Cytoplasmic side of the membrane. The chain crosses the membrane as a helical span at residues 318–339 (REMAMLLVFICVAMAIFSALSQ). Topologically, residues 340–357 (LLEHGLDLETSNKDFASI) are extracellular. Residues 358-369 (PAACWWVIISMT) constitute an intramembrane region (helical). The Selectivity filter signature appears at 370-375 (TVGYGD). The stretch at 370–377 (TVGYGDMY) is an intramembrane region. Over 378–384 (PITVPGR) the chain is Extracellular. Residues 385-413 (ILGGVCVVSGIVLLALPITFIYHSFVQCY) form a helical membrane-spanning segment. Residues 414-433 (HELKFRSARYSRSLSAEFLN) are Cytoplasmic-facing.

It belongs to the potassium channel family. G (TC 1.A.1.2) subfamily. Kv6.3/KCNG3 sub-subfamily. As to quaternary structure, heterotetramer with KCNB1. Does not form homomultimers.

It localises to the cell membrane. It is found in the cytoplasm. Regulatory subunit of the voltage-gated potassium (Kv) channel which, when coassembled with KCNB1, modulates the kinetics parameters of the heterotetrameric channel namely the inactivation and deactivation rate. Potassium channel subunit that does not form functional channels by itself. Reduces the deactivation rate. Moderately acceleratee activation. In Mus musculus (Mouse), this protein is Voltage-gated potassium channel regulatory subunit KCNG3.